The sequence spans 317 residues: Transaldolase (317 aa).

The active-site Schiff-base intermediate with substrate is the Lys-126.

Belongs to the transaldolase family. Type 1 subfamily. In terms of assembly, homodimer.

The protein localises to the cytoplasm. The catalysed reaction is D-sedoheptulose 7-phosphate + D-glyceraldehyde 3-phosphate = D-erythrose 4-phosphate + beta-D-fructose 6-phosphate. Its pathway is carbohydrate degradation; pentose phosphate pathway; D-glyceraldehyde 3-phosphate and beta-D-fructose 6-phosphate from D-ribose 5-phosphate and D-xylulose 5-phosphate (non-oxidative stage): step 2/3. Functionally, transaldolase is important for the balance of metabolites in the pentose-phosphate pathway. The polypeptide is Transaldolase (Burkholderia vietnamiensis (strain G4 / LMG 22486) (Burkholderia cepacia (strain R1808))).